A 61-amino-acid polypeptide reads, in one-letter code: Small ribosomal subunit protein uS14B (61 aa).

Zn(2+)-binding residues include Cys24, Cys27, Cys40, and Cys43.

The protein belongs to the universal ribosomal protein uS14 family. Zinc-binding uS14 subfamily. Part of the 30S ribosomal subunit. Contacts proteins S3 and S10. Zn(2+) is required as a cofactor.

In terms of biological role, binds 16S rRNA, required for the assembly of 30S particles and may also be responsible for determining the conformation of the 16S rRNA at the A site. The protein is Small ribosomal subunit protein uS14B of Streptococcus pyogenes serotype M6 (strain ATCC BAA-946 / MGAS10394).